The chain runs to 563 residues: Arginine--tRNA ligase (563 aa).

The short motif at 121 to 131 is the 'HIGH' region element; that stretch reads PNIAKPFSIGH.

Belongs to the class-I aminoacyl-tRNA synthetase family. In terms of assembly, monomer.

Its subcellular location is the cytoplasm. The enzyme catalyses tRNA(Arg) + L-arginine + ATP = L-arginyl-tRNA(Arg) + AMP + diphosphate. In Streptococcus pneumoniae serotype 4 (strain ATCC BAA-334 / TIGR4), this protein is Arginine--tRNA ligase (argS).